A 22-amino-acid polypeptide reads, in one-letter code: Zinc finger protein 326 (22 aa).

The interval 1 to 22 (QGYGFNEPEQTRNQGGSSWEAP) is disordered. A compositionally biased stretch (polar residues) spans 11-22 (TRNQGGSSWEAP).

Belongs to the AKAP95 family.

It is found in the nucleus matrix. Its function is as follows. Probable transcriptional activator which may play a role in neuronal differentiation. Able to bind DNA and activate expression in vitro. In Rattus norvegicus (Rat), this protein is Zinc finger protein 326 (Znf326).